The chain runs to 317 residues: Putative AP2/ERF and B3 domain-containing protein Os01g0140700 (317 aa).

Positions 1–37 (MEQEAAMVVFSCNSGSGGSSSTTDSKQEEEEEEELAA) are disordered. Residues 27–37 (QEEEEEEELAA) are compositionally biased toward acidic residues. Residues 66–121 (RYKGVVPQPNGRWGAQIYERHARVWLGTFPDEEAAARAYDVAALRFRGRDAVTNRA) constitute a DNA-binding region (AP2/ERF). Residues 178–287 (FEKAVTPSDV…EKHLLIDCKK (110 aa)) constitute a DNA-binding region (TF-B3).

Its subcellular location is the nucleus. This is Putative AP2/ERF and B3 domain-containing protein Os01g0140700 from Oryza sativa subsp. japonica (Rice).